A 560-amino-acid polypeptide reads, in one-letter code: Putative transport protein VS_1837 (560 aa).

5 consecutive transmembrane segments (helical) span residues 5-25, 37-57, 66-86, 91-111, and 155-175; these read VVLL…SIGL, LGNS…GFSF, FMLF…GIFF, HYLI…YFCS, and LGLV…VGLI. 2 RCK C-terminal domains span residues 203 to 292 and 293 to 376; these read RGLG…FRNG and KEVF…KIGF. The next 6 helical transmembrane spans lie at 386–406, 409–429, 450–470, 478–498, 506–526, and 539–559; these read LTAF…TMTF, VSFG…LGFL, LGLM…IFEH, VIGI…LVGA, ALLF…DIVN, and AGTY…IIII.

This sequence belongs to the AAE transporter (TC 2.A.81) family. YbjL subfamily.

It localises to the cell membrane. The protein is Putative transport protein VS_1837 of Vibrio atlanticus (strain LGP32) (Vibrio splendidus (strain Mel32)).